Here is a 276-residue protein sequence, read N- to C-terminus: 2-dehydro-3-deoxyphosphooctonate aldolase (276 aa).

The protein belongs to the KdsA family.

The protein resides in the cytoplasm. It carries out the reaction D-arabinose 5-phosphate + phosphoenolpyruvate + H2O = 3-deoxy-alpha-D-manno-2-octulosonate-8-phosphate + phosphate. The protein operates within carbohydrate biosynthesis; 3-deoxy-D-manno-octulosonate biosynthesis; 3-deoxy-D-manno-octulosonate from D-ribulose 5-phosphate: step 2/3. Its pathway is bacterial outer membrane biogenesis; lipopolysaccharide biosynthesis. This is 2-dehydro-3-deoxyphosphooctonate aldolase from Chelativorans sp. (strain BNC1).